Reading from the N-terminus, the 133-residue chain is Fatty acid-binding protein, heart (133 aa).

A2 is subject to N-acetylalanine. Phosphothreonine is present on T8. Y20 carries the post-translational modification Phosphotyrosine; by Tyr-kinases. A Phosphoserine modification is found at S23. Phosphothreonine is present on T30. Position 83 is a phosphoserine (S83). A (9Z)-octadecenoate-binding site is contributed by 127 to 129; that stretch reads RTY. 127–129 lines the hexadecanoate pocket; it reads RTY. 127-129 contributes to the octadecanoate binding site; it reads RTY.

As to expression, heart, but also skeletal muscle, kidney, brain and mammary gland.

It localises to the cytoplasm. In terms of biological role, FABPs are thought to play a role in the intracellular transport of long-chain fatty acids and their acyl-CoA esters. The chain is Fatty acid-binding protein, heart (Fabp3) from Rattus norvegicus (Rat).